The primary structure comprises 136 residues: Single-stranded DNA-binding protein 1 (136 aa).

The SSB domain maps to 4–109 (LNKMQLIGNL…IMAKEMQMLG (106 aa)). The interval 109 to 136 (GKKQDNNKVGNARHGDALPADEDDYYDF) is disordered. A compositionally biased stretch (acidic residues) spans 127 to 136 (PADEDDYYDF).

In terms of assembly, homotetramer.

The polypeptide is Single-stranded DNA-binding protein 1 (ssb1) (Xylella fastidiosa (strain 9a5c)).